A 351-amino-acid polypeptide reads, in one-letter code: Probable glucuronosyltransferase Os10g0205300 (351 aa).

At 1–11 the chain is on the cytoplasmic side; it reads MAAPPCPPRRP. A helical; Signal-anchor for type II membrane protein transmembrane segment spans residues 12–32; the sequence is ISAPCFLLCFLLGFVAGLFPF. Over 33–351 the chain is Lumenal; that stretch reads AHRHLHLDLH…PLKKEARPLL (319 aa). The interval 138–169 is disordered; it reads SSPVPDAPQDRPRRRGRRQDRPAVDSRARQRN. Positions 156-169 are enriched in basic and acidic residues; it reads QDRPAVDSRARQRN. Asn-259 carries an N-linked (GlcNAc...) asparagine glycan.

It belongs to the glycosyltransferase 43 family.

Its subcellular location is the golgi apparatus membrane. Its function is as follows. Involved in the synthesis of glucuronoxylan hemicellulose in secondary cell walls. This is Probable glucuronosyltransferase Os10g0205300 from Oryza sativa subsp. japonica (Rice).